The chain runs to 120 residues: Ribosome-binding factor A (120 aa).

It belongs to the RbfA family. In terms of assembly, monomer. Binds 30S ribosomal subunits, but not 50S ribosomal subunits or 70S ribosomes.

The protein localises to the cytoplasm. Functionally, one of several proteins that assist in the late maturation steps of the functional core of the 30S ribosomal subunit. Associates with free 30S ribosomal subunits (but not with 30S subunits that are part of 70S ribosomes or polysomes). Required for efficient processing of 16S rRNA. May interact with the 5'-terminal helix region of 16S rRNA. The chain is Ribosome-binding factor A from Dictyoglomus thermophilum (strain ATCC 35947 / DSM 3960 / H-6-12).